The sequence spans 382 residues: Chaperone protein DnaJ (382 aa).

The J domain maps to 4–69 (DYYEVLGVSR…DKRRRYDQFG (66 aa)). A CR-type zinc finger spans residues 138–219 (GVEKTIKIKK…CYGEGIKQGE (82 aa)). Residues C151, C154, C167, C170, C193, C196, C207, and C210 each contribute to the Zn(2+) site. CXXCXGXG motif repeat units follow at residues 151-158 (CKECNGSG), 167-174 (CPTCHGAG), 193-200 (CPTCGGEG), and 207-214 (CPSCYGEG).

It belongs to the DnaJ family. Homodimer. Zn(2+) is required as a cofactor.

It is found in the cytoplasm. In terms of biological role, participates actively in the response to hyperosmotic and heat shock by preventing the aggregation of stress-denatured proteins and by disaggregating proteins, also in an autonomous, DnaK-independent fashion. Unfolded proteins bind initially to DnaJ; upon interaction with the DnaJ-bound protein, DnaK hydrolyzes its bound ATP, resulting in the formation of a stable complex. GrpE releases ADP from DnaK; ATP binding to DnaK triggers the release of the substrate protein, thus completing the reaction cycle. Several rounds of ATP-dependent interactions between DnaJ, DnaK and GrpE are required for fully efficient folding. Also involved, together with DnaK and GrpE, in the DNA replication of plasmids through activation of initiation proteins. This Chlorobium luteolum (strain DSM 273 / BCRC 81028 / 2530) (Pelodictyon luteolum) protein is Chaperone protein DnaJ.